A 179-amino-acid chain; its full sequence is Large ribosomal subunit protein uL5 (179 aa).

The protein belongs to the universal ribosomal protein uL5 family. Part of the 50S ribosomal subunit; part of the 5S rRNA/L5/L18/L25 subcomplex. Contacts the 5S rRNA and the P site tRNA. Forms a bridge to the 30S subunit in the 70S ribosome.

This is one of the proteins that bind and probably mediate the attachment of the 5S RNA into the large ribosomal subunit, where it forms part of the central protuberance. In the 70S ribosome it contacts protein S13 of the 30S subunit (bridge B1b), connecting the 2 subunits; this bridge is implicated in subunit movement. Contacts the P site tRNA; the 5S rRNA and some of its associated proteins might help stabilize positioning of ribosome-bound tRNAs. In Shewanella piezotolerans (strain WP3 / JCM 13877), this protein is Large ribosomal subunit protein uL5.